Reading from the N-terminus, the 1027-residue chain is C2 and GRAM domain-containing protein At5g50170 (1027 aa).

The C2 1 domain maps to Met-1–Phe-103. Positions Ser-158–Asp-167 are enriched in basic and acidic residues. Disordered regions lie at residues Ser-158–Lys-177 and Leu-201–Ser-223. Over residues Gly-168 to Lys-177 the composition is skewed to basic residues. A compositionally biased stretch (polar residues) spans Ser-206–Ser-223. Residues Thr-253–Asp-426 enclose the VASt 1 domain. The helical transmembrane segment at Phe-452 to Val-472 threads the bilayer. In terms of domain architecture, C2 2 spans Thr-516–Val-639. A GRAM domain is found at Ala-693–Val-756. A VASt 2 domain is found at Met-855–Ser-1018.

It is found in the membrane. In Arabidopsis thaliana (Mouse-ear cress), this protein is C2 and GRAM domain-containing protein At5g50170.